Here is a 357-residue protein sequence, read N- to C-terminus: tRNA/tmRNA (uracil-C(5))-methyltransferase (357 aa).

S-adenosyl-L-methionine is bound by residues Gln-185, Tyr-212, Asn-217, Glu-233, and Asp-291. Cys-316 acts as the Nucleophile in catalysis. Glu-350 functions as the Proton acceptor in the catalytic mechanism.

Belongs to the class I-like SAM-binding methyltransferase superfamily. RNA M5U methyltransferase family. TrmA subfamily.

It catalyses the reaction uridine(54) in tRNA + S-adenosyl-L-methionine = 5-methyluridine(54) in tRNA + S-adenosyl-L-homocysteine + H(+). The catalysed reaction is uridine(341) in tmRNA + S-adenosyl-L-methionine = 5-methyluridine(341) in tmRNA + S-adenosyl-L-homocysteine + H(+). Functionally, dual-specificity methyltransferase that catalyzes the formation of 5-methyluridine at position 54 (m5U54) in all tRNAs, and that of position 341 (m5U341) in tmRNA (transfer-mRNA). This chain is tRNA/tmRNA (uracil-C(5))-methyltransferase, found in Campylobacter hominis (strain ATCC BAA-381 / DSM 21671 / CCUG 45161 / LMG 19568 / NCTC 13146 / CH001A).